The primary structure comprises 432 residues: Adenylosuccinate synthetase (432 aa).

GTP is bound by residues 13–19 (GDEGKGK) and 41–43 (GHT). Residue aspartate 14 is the Proton acceptor of the active site. Mg(2+) contacts are provided by aspartate 14 and glycine 41. IMP contacts are provided by residues 14–17 (DEGK), 39–42 (NAGH), threonine 131, arginine 145, glutamine 226, threonine 241, and arginine 305. The active-site Proton donor is histidine 42. A substrate-binding site is contributed by 301–307 (SVTGRAR). GTP is bound by residues arginine 307, 333 to 335 (KLD), and 416 to 418 (STG).

The protein belongs to the adenylosuccinate synthetase family. As to quaternary structure, homodimer. It depends on Mg(2+) as a cofactor.

It localises to the cytoplasm. It catalyses the reaction IMP + L-aspartate + GTP = N(6)-(1,2-dicarboxyethyl)-AMP + GDP + phosphate + 2 H(+). It functions in the pathway purine metabolism; AMP biosynthesis via de novo pathway; AMP from IMP: step 1/2. Plays an important role in the de novo pathway of purine nucleotide biosynthesis. Catalyzes the first committed step in the biosynthesis of AMP from IMP. This Neisseria meningitidis serogroup A / serotype 4A (strain DSM 15465 / Z2491) protein is Adenylosuccinate synthetase.